The primary structure comprises 84 residues: UPF0248 protein PF1300 (84 aa).

The protein belongs to the UPF0248 family.

The chain is UPF0248 protein PF1300 from Pyrococcus furiosus (strain ATCC 43587 / DSM 3638 / JCM 8422 / Vc1).